The sequence spans 493 residues: Cysteine sulfinic acid decarboxylase (493 aa).

At K305 the chain carries N6-(pyridoxal phosphate)lysine.

The protein belongs to the group II decarboxylase family. Homodimer. The cofactor is pyridoxal 5'-phosphate. As to expression, expressed in kidney and liver not detected in lymphoid tissues and lung. Expressed in kidney, liver and brain. 7 and 4 times higher expression in kidney and liver than in brain, respectively. Low level of detection in skeletal muscle. Expressed in brain, olfactory bulb, liver, skeletal muscle and kidney with the highest expression in liver and lowest in skeletal muscle (at protein level).

The enzyme catalyses L-aspartate + H(+) = beta-alanine + CO2. It catalyses the reaction 3-sulfino-L-alanine + H(+) = hypotaurine + CO2. The catalysed reaction is L-cysteate + H(+) = taurine + CO2. The protein operates within organosulfur biosynthesis; taurine biosynthesis; hypotaurine from L-cysteine: step 2/2. With respect to regulation, activated by Mn(2+). Inhibited by bis-carboxymethyl-trithiocarbonate, ethylxanthogenacetic acid and 2,5-disulfoaniline. Not affected by Li(+) within 0.05-40 mM concentration range. Its function is as follows. Catalyzes the decarboxylation of L-aspartate, 3-sulfino-L-alanine (cysteine sulfinic acid), and L-cysteate to beta-alanine, hypotaurine and taurine, respectively. The preferred substrate is 3-sulfino-L-alanine. Does not exhibit any decarboxylation activity toward glutamate. The sequence is that of Cysteine sulfinic acid decarboxylase from Mus musculus (Mouse).